The following is a 790-amino-acid chain: Protein SEY1 (790 aa).

Topologically, residues 1–692 (MELSEGELSH…KRSIVQHITQ (692 aa)) are cytoplasmic. Residues 55–284 (GNNYHIISVF…VNNELFKPEY (230 aa)) enclose the GB1/RHD3-type G domain. 65–72 (GSQSTGKS) lines the GTP pocket. A helical membrane pass occupies residues 693 to 713 (IPYYIYLIILVLGWNEFMAII). At 714–716 (RNP) the chain is on the lumenal side. The chain crosses the membrane as a helical span at residues 717 to 737 (LFFSLSIVLGATVYVLYYLNL). The Cytoplasmic segment spans residues 738–790 (LKPAMLVAQRTMDEVIIMAKTKLREVLIDDHEVTGRQLNKIAGGKENIELDDM).

It belongs to the TRAFAC class dynamin-like GTPase superfamily. GB1/RHD3 GTPase family. RHD3 subfamily.

It localises to the endoplasmic reticulum membrane. Functionally, cooperates with the reticulon proteins and tubule-shaping DP1 family proteins to generate and maintain the structure of the tubular endoplasmic reticulum network. Has GTPase activity, which is required for its function in ER organization. The sequence is that of Protein SEY1 from Candida dubliniensis (strain CD36 / ATCC MYA-646 / CBS 7987 / NCPF 3949 / NRRL Y-17841) (Yeast).